The chain runs to 392 residues: Fasciculation and elongation protein zeta-1 (392 aa).

The tract at residues 1–36 (MEAPLVSLDEEFEDIRPSCTEEPEEKPQCLYGTSPH) is disordered. A Phosphoserine modification is found at Ser-58. The interval 175–196 (MQNSPDPEEEEEVLEEEDGGEI) is disordered. The span at 180–194 (DPEEEEEVLEEEDGG) shows a compositional bias: acidic residues. Positions 230–298 (SELTELLDRV…KKRRKEKGLS (69 aa)) form a coiled coil. Residues Ser-298 and Ser-316 each carry the phosphoserine modification.

The protein belongs to the zygin family. As to quaternary structure, homodimer. Interacts with the NH2-terminal variable region (V1) of PKC zeta and weakly with that of PKC epsilon. Interacts with UBE4B and SAP30L. Interacts with SCOC and ULK1; SCOC interferes with ULK1-binding to FEZ1. Directly interacts with SCOC and UVRAG. Stabilizes the interaction between SCOC and UVRAG during amino acid starvation. Post-translationally, phosphorylated by protein kinase C zeta; which enhances interaction with UBE4B and polyubiquitination. In terms of processing, polyubiquitinated in a UBE4B-dependent manner; which does not lead to proteasomal degradation and may be important for neurogenic activity. Polyubiquitin linkage seems to be mainly through Lys-26.

The protein resides in the cytoplasm. Its subcellular location is the cytoskeleton. The protein localises to the microtubule organizing center. It localises to the centrosome. It is found in the cell membrane. May be involved in axonal outgrowth as component of the network of molecules that regulate cellular morphology and axon guidance machinery. May participate in the transport of mitochondria and other cargos along microtubules. In Mus musculus (Mouse), this protein is Fasciculation and elongation protein zeta-1 (Fez1).